The following is an 864-amino-acid chain: Protein PAT1 homolog 1 (864 aa).

Polar residues predominate over residues 427–439; the sequence is PPNSRPNGPQFSG. Disordered regions lie at residues 427–460, 518–539, and 551–602; these read PPNSRPNGPQFSGPQVGPHSPGARGQQRRNSGMP, WTAHPKPESKQPLPASSESRKD, and EMQK…STHN. The segment covering 551–580 has biased composition (basic and acidic residues); sequence EMQKERLRDREKERQRERQERIDRGEERKP.

This sequence belongs to the PAT1 family.

It is found in the cytoplasm. The protein localises to the P-body. Its function is as follows. RNA-binding protein involved in deadenylation-dependent decapping of mRNAs, leading to the degradation of mRNAs. Acts as a scaffold protein that connects deadenylation and decapping machinery. Required for the recruitment of P-body components such as cgh-1 in somatic blastomeres. May play a role in recruiting the decapping enzyme dcap-1 to cytoplasmic puncta in the cell body of the posterior touch receptor neuron, PLM. The polypeptide is Protein PAT1 homolog 1 (patr-1) (Caenorhabditis briggsae).